The following is a 202-amino-acid chain: Securin-2 (202 aa).

Positions 60 to 105 are disordered; it reads TRKALGTVNRATEKSVKTNGPRKQKQPSFSAKKMTEKTVKTKSSVP. Residues 61-64 carry the D-box motif; sequence RKAL. The SH3-binding motif lies at 163–173; it reads PPSPVKMPSPP.

Belongs to the securin family. As to expression, expressed at low levels in the pituitary, liver, spleen, prostate, testis, ovary, small intestine and colon. Also expressed in various pituitary, testicular, liver and ovarian tumors.

The protein localises to the cytoplasm. It localises to the nucleus. This is Securin-2 (PTTG2) from Homo sapiens (Human).